Reading from the N-terminus, the 480-residue chain is PTS system sucrose-specific EIIBC component (480 aa).

One can recognise a PTS EIIB type-1 domain in the interval 4–87 (KKSAENILQA…EKITGKEASS (84 aa)). Cys-26 acts as the Phosphocysteine intermediate; for EIIB activity in catalysis. A run of 8 helical transmembrane segments spans residues 109–129 (LSDI…LMGI), 158–178 (MINI…GFSA), 182–202 (FGGN…PELM), 264–284 (LLTP…FVGP), 303–323 (FGGA…VITG), 349–369 (PIAT…FFII), 405–425 (PFIG…FFKV), and 449–469 (LHYG…TYAL). The PTS EIIC type-1 domain maps to 120 to 480 (IVAGGLLMGI…YRKKYRNIEA (361 aa)).

The protein resides in the cell membrane. The enzyme catalyses N(pros)-phospho-L-histidyl-[protein](out) + sucrose = sucrose 6(G)-phosphate(in) + L-histidyl-[protein]. In terms of biological role, the phosphoenolpyruvate-dependent sugar phosphotransferase system (sugar PTS), a major carbohydrate active transport system, catalyzes the phosphorylation of incoming sugar substrates concomitantly with their translocation across the cell membrane. This system is involved in sucrose transport. This Staphylococcus xylosus protein is PTS system sucrose-specific EIIBC component.